The chain runs to 594 residues: Chitooligosaccharidolytic beta-N-acetylglucosaminidase (594 aa).

The N-terminal stretch at 1 to 22 (MWSRRIPLFIFGVLVLILSVAA) is a signal peptide. Disulfide bonds link C31/C59 and C36/C55. An N-linked (GlcNAc...) asparagine glycan is attached at N164. Residues D249 and H303 each act as charge relay system in the active site. 2 disulfides stabilise this stretch: C316/C373 and C326/C331. E368 serves as the catalytic Charge relay system. N375 carries an N-linked (GlcNAc...) asparagine glycan. 2 cysteine pairs are disulfide-bonded: C478/C491 and C585/C592.

It belongs to the glycosyl hydrolase 20 family. Homodimer.

It carries out the reaction Hydrolysis of terminal non-reducing N-acetyl-D-hexosamine residues in N-acetyl-beta-D-hexosaminides.. Inhibited by O-(2-acetamido-2-deoxy-D-glucopyransylidene)-amino-N-phenylcarbamate (PUGNAc). Inhibited by thiabendazole (TMG)-chitotriomycin. Inhibited by 6-(dimethylamino)-2-(2-(((5-methyl-1,3,4-thiadiazol-2-yl)methyl)amino)ethyl)- 1H-benzo[de]isoquinoline-1,3(2H)-dione (Q2), a synthesized non-carbohydrate unsymmetrical dyad of naphthalimide and thiadiazole having a dimethylamino group at C4 of the naphthalimide. Inhibited poorly by N-acetyl-glucosamine (NAG)-thiazoline (NGT), but when the thiazoline ring of NGT is replaced by a bulky substituent such as in compound 1,2-dideoxy-2'-methylamino-alpha-D-glucopyranoso-[2,1-d]-Delta2'-thiazoline (NMAGT), the inhibition constant Ki is lowered 600-fold compared to that of NGT. Inhibited by berberine, berberine analogs thalifendine and palmatine, and berberine derivative SYSU-1, but not by berberine analog tetrahydroberberine. Hydrolyzes one beta-GlcNAc unit at a time from the non-reducing ends of substrates, with a preference for shorter substrates. The 2-acetamido group and the beta-glycoside bond linkage in the substrate are required for its activity. Active with p-nitrophenyl (pNP)-beta-GlcNAc, pNP-beta-GalNAc and chitooligosaccharides (degree of polymerization from 2 to 6), but not with the complex N-glycan substrate (GlcNAcbeta-1,2Manalpha-1,6)(GlcNAcbeta-1,2Manalpha-1,3)Manbeta-1,4GlcNAcbeta-1,4GlcNAc-PA (GnGn-PA), pNP-alpha-GlcNAc or with the long polymer colloidal chitin. Involved in chitin catabolism. Involved in the degradation of old cuticle during the pupation stage. This chain is Chitooligosaccharidolytic beta-N-acetylglucosaminidase, found in Ostrinia furnacalis (Asian corn borer).